The following is a 125-amino-acid chain: Histone H2A (125 aa).

The span at 1–18 (MSGRGKGGKVKGKSKTRS) shows a compositional bias: basic residues. Residues 1-23 (MSGRGKGGKVKGKSKTRSSRAGL) are disordered. N-acetylserine is present on Ser2. Gln104 bears the N5-methylglutamine mark.

Belongs to the histone H2A family. The nucleosome is a histone octamer containing two molecules each of H2A, H2B, H3 and H4 assembled in one H3-H4 heterotetramer and two H2A-H2B heterodimers. The octamer wraps approximately 147 bp of DNA.

It localises to the nucleus. It is found in the chromosome. Core component of nucleosome. Nucleosomes wrap and compact DNA into chromatin, limiting DNA accessibility to the cellular machineries which require DNA as a template. Histones thereby play a central role in transcription regulation, DNA repair, DNA replication and chromosomal stability. DNA accessibility is regulated via a complex set of post-translational modifications of histones, also called histone code, and nucleosome remodeling. The sequence is that of Histone H2A from Sepia officinalis (Common cuttlefish).